A 213-amino-acid polypeptide reads, in one-letter code: Flagellin A1 (213 aa).

Residues 1–10 (MFENINEDRG) constitute a propeptide that is removed on maturation. N-linked (GlcNAc...) asparagine glycans are attached at residues Asn70, Asn115, and Asn172.

Belongs to the archaeal flagellin family. Post-translationally, glycosylated by a pentasaccharide similar to the S-layer glycoprotein, probably comprising a hexose, 2 hexuronic acids, a methyl ester of a hexuronic acid and mannose. Glycosylation is required for biosynthesis of stable flagella.

It is found in the archaeal flagellum. Its function is as follows. Major flagellin required for motility. Not involved in PibD-dependent surface adhesion. Much more abundant in cells compared to FlgA2. This is Flagellin A1 (flgA1) from Haloferax volcanii (strain ATCC 29605 / DSM 3757 / JCM 8879 / NBRC 14742 / NCIMB 2012 / VKM B-1768 / DS2) (Halobacterium volcanii).